The sequence spans 734 residues: MSLKNGEQNDLSPKDSVKGNDQYRSPSGIHVEHEEESRNDFWQFESSNLFRHPRIHLEPQEKSDNNLKKFVIKKLEKSCQCSSTKAKNTIFGFLPVLQWLPKYDLKKNILGDMMSGLIVGILLVPQSIAYSLLAGQEPIYGLYTSFFASLIYFILGTSRHISVGIFGILCLMIGEVVDRELYIAGYDTVHAASNESSLVNQMSNQTCDRSCYAITVGSTVTFVAGVYQVAMGFFQVGFVSVYLSDALLGGFVTGASFTILTSQVKYLLGLSLPRSGGVGSLITTWIHIFRNIHKTNICDLITSLLCLLVLLPTKELNERFKSKLKAPIPVELFVVVAATLASHFGKLSEKYGTSIAGHIPTGFMPPKAPDWNLIPRVAVDAIAIAIIGFAITVSLSEMFAKKHGYTVKANQEMYAIGFCNIIPSFFHSFTTSAALAKTLVKESTGCQTQVSGVMTALVLLLVLLVIAPLFFSLQKSVLGVITIVNLRGALCKFKDLPQMWRISRMDTVIWFVTMLSSALISTEIGLLTGVCFSMFCVILRTQKPKASLLGLVEDSEVFESMSAYKNLQAKSGIKIFRFVAPLYYVNKEYFKSVLYKKTLNPVLVKAAQRKAAKKKIKRETVTLSGIQDEVSVQLSYDPLEFHTIVIDCSAIQFLDTAGIHTLKEVRRDYEAIGIQVLLAQCNPSVRDSLARGEYCKKDEENLLFYSVYEAMTFAEDSQNQKERYVPNGPSFSSD.

Over residues Met1 to Leu11 the composition is skewed to polar residues. The tract at residues Met1–Arg38 is disordered. Phosphoserine occurs at positions 12 and 16. 2 consecutive transmembrane segments (helical) span residues Met113–Leu133 and Pro138–Ser158. N-linked (GlcNAc...) asparagine glycans are attached at residues Asn194 and Asn204. 8 helical membrane passes run Phe222 to Tyr242, Leu247 to Leu267, Gly269 to Phe289, Ile292 to Pro312, Val379 to Phe399, Ala415 to Leu435, Val453 to Leu473, and Leu519 to Leu539. Residues Ala563 to Ala714 form the STAS domain.

The protein belongs to the SLC26A/SulP transporter (TC 2.A.53) family. Post-translationally, N-glycosylated.

Its subcellular location is the cell membrane. The protein localises to the apical cell membrane. The enzyme catalyses oxalate(in) + sulfate(out) = oxalate(out) + sulfate(in). It carries out the reaction sulfate(out) + 2 chloride(in) = sulfate(in) + 2 chloride(out). It catalyses the reaction oxalate(out) + 2 chloride(in) = oxalate(in) + 2 chloride(out). The catalysed reaction is bromide(in) + chloride(out) = bromide(out) + chloride(in). The enzyme catalyses nitrate(in) + chloride(out) = nitrate(out) + chloride(in). It carries out the reaction iodide(in) + chloride(out) = iodide(out) + chloride(in). Sulfate transporter which mediates sulfate uptake into chondrocytes in order to maintain adequate sulfation of proteoglycans which is needed for cartilage development. Mediates electroneutral anion exchange of sulfate ions for oxalate ions, sulfate and oxalate ions for chloride and/or hydroxyl ions and chloride ions for bromide, iodide and nitrate ions. The coupling of sulfate transport to both hydroxyl and chloride ions likely serves to ensure transport at both acidic pH when most sulfate uptake is mediated by sulfate-hydroxide exchange and alkaline pH when most sulfate uptake is mediated by sulfate-chloride exchange. Essential for chondrocyte proliferation, differentiation and cell size expansion. This chain is Sulfate transporter (SLC26A2), found in Ovis aries (Sheep).